The primary structure comprises 148 residues: D-aminoacyl-tRNA deacylase (148 aa).

Residues 137-138 (GP) carry the Gly-cisPro motif, important for rejection of L-amino acids motif.

It belongs to the DTD family. As to quaternary structure, homodimer.

The protein resides in the cytoplasm. The catalysed reaction is glycyl-tRNA(Ala) + H2O = tRNA(Ala) + glycine + H(+). The enzyme catalyses a D-aminoacyl-tRNA + H2O = a tRNA + a D-alpha-amino acid + H(+). In terms of biological role, an aminoacyl-tRNA editing enzyme that deacylates mischarged D-aminoacyl-tRNAs. Also deacylates mischarged glycyl-tRNA(Ala), protecting cells against glycine mischarging by AlaRS. Acts via tRNA-based rather than protein-based catalysis; rejects L-amino acids rather than detecting D-amino acids in the active site. By recycling D-aminoacyl-tRNA to D-amino acids and free tRNA molecules, this enzyme counteracts the toxicity associated with the formation of D-aminoacyl-tRNA entities in vivo and helps enforce protein L-homochirality. The chain is D-aminoacyl-tRNA deacylase from Deinococcus geothermalis (strain DSM 11300 / CIP 105573 / AG-3a).